Reading from the N-terminus, the 123-residue chain is MPTINQLIAKGREPAAKRNKVPALQGCPQKRGVCTRVYTTTPKKPNSALRKVAKVRLTNGYEVVSYIPGEGHNLQEHSVVLIRGGRVKDLPGVRYHILRGVLDTQGIAKRRQRRSLYGAKRPK.

Asp-89 carries the 3-methylthioaspartic acid modification.

The protein belongs to the universal ribosomal protein uS12 family. In terms of assembly, part of the 30S ribosomal subunit. Contacts proteins S8 and S17. May interact with IF1 in the 30S initiation complex.

In terms of biological role, with S4 and S5 plays an important role in translational accuracy. Functionally, interacts with and stabilizes bases of the 16S rRNA that are involved in tRNA selection in the A site and with the mRNA backbone. Located at the interface of the 30S and 50S subunits, it traverses the body of the 30S subunit contacting proteins on the other side and probably holding the rRNA structure together. The combined cluster of proteins S8, S12 and S17 appears to hold together the shoulder and platform of the 30S subunit. This chain is Small ribosomal subunit protein uS12, found in Gluconacetobacter diazotrophicus (strain ATCC 49037 / DSM 5601 / CCUG 37298 / CIP 103539 / LMG 7603 / PAl5).